The chain runs to 306 residues: Glutaminase (306 aa).

The substrate site is built by serine 64, asparagine 115, glutamate 159, asparagine 166, tyrosine 190, tyrosine 242, and valine 260.

It belongs to the glutaminase family. Homotetramer.

It carries out the reaction L-glutamine + H2O = L-glutamate + NH4(+). This Aeromonas salmonicida (strain A449) protein is Glutaminase.